Here is a 578-residue protein sequence, read N- to C-terminus: A-type ATP synthase subunit A (578 aa).

Position 228–235 (228–235 (GPFGSGKT)) interacts with ATP.

It belongs to the ATPase alpha/beta chains family. As to quaternary structure, has multiple subunits with at least A(3), B(3), C, D, E, F, H, I and proteolipid K(x).

Its subcellular location is the cell membrane. It carries out the reaction ATP + H2O + 4 H(+)(in) = ADP + phosphate + 5 H(+)(out). In terms of biological role, component of the A-type ATP synthase that produces ATP from ADP in the presence of a proton gradient across the membrane. The A chain is the catalytic subunit. The sequence is that of A-type ATP synthase subunit A from Methanosarcina acetivorans (strain ATCC 35395 / DSM 2834 / JCM 12185 / C2A).